The sequence spans 711 residues: Receptor-like protein 43 (711 aa).

A signal peptide spans 1–30; the sequence is MKGFWNSKSTIRITLSFIFLFISQFSDVLA. Residues 31–666 are Extracellular-facing; it reads APTRHLCRPE…EDEEVISWIA (636 aa). N-linked (GlcNAc...) asparagine glycans are attached at residues asparagine 78, asparagine 114, asparagine 143, asparagine 167, and asparagine 191. LRR repeat units follow at residues 120–143, 144–168, 170–192, 193–216, 218–240, 241–266, 268–288, and 289–316; these read LHFLTTLDLSFNDFKGQIMSSIEN, LSHLTYLDLSFNHFSGQVPSSIGNL, HLTFLDLYCNQFSGQVPSSIGNL, SHLTTLELSFNRFFGQFPSSIGGL, HLTTLNLFVNNFLGQIPSSIGNL, SNLTSLYLCKNNFSGQIPSFIGNLSQ, TRLDLSSNNFFGEIPGWLWTL, and PNLFYVNLSYNTFIGFQRPNKPEPSMGH. Residues asparagine 239, asparagine 242, asparagine 252, and asparagine 263 are each glycosylated (N-linked (GlcNAc...) asparagine). Asparagine 295, asparagine 323, asparagine 347, asparagine 362, and asparagine 372 each carry an N-linked (GlcNAc...) asparagine glycan. Residues 317–334 form an LRR 9; degenerate repeat; that stretch reads LLGSNNNFTGKIPSFICE. 10 LRR repeats span residues 335 to 358, 360 to 384, 386 to 406, 407 to 430, 431 to 452, 453 to 476, 519 to 543, 544 to 567, 568 to 591, and 593 to 616; these read LRSLETLDLSDNNFSGLIPRCMGN, KSNLSHLNLRQNNLSGGLPKHIFEI, RSLDVGHNQLVGKLPRSLRFF, STLEVLNVESNRINDTFPFWLTSL, PKLQVLVLRSNAFHGPIHEASF, LKLRIIDISHNHFNGTLPSDYFVK, LTIYTALDFSGNKFEGEIPKSIGLL, KELLVLNLSNNAFTGHIPSSMGKL, TALESLDVSQNKLYGEIPQEIGNL, and FLSCMNFSHNQLAGLVPGGQQFLT. Asparagine 420 carries an N-linked (GlcNAc...) asparagine glycan. A glycan (N-linked (GlcNAc...) asparagine) is linked at asparagine 466. N-linked (GlcNAc...) asparagine glycosylation is found at asparagine 550, asparagine 590, and asparagine 598. The chain crosses the membrane as a helical span at residues 667–687; that stretch reads AAIGFIPGIVLGLTIGYILVF. Residues 688 to 711 are Cytoplasmic-facing; sequence YKPEWFIKTFGRNNCRRRSTTTTH.

Belongs to the RLP family.

It is found in the cell membrane. The polypeptide is Receptor-like protein 43 (Arabidopsis thaliana (Mouse-ear cress)).